Here is a 92-residue protein sequence, read N- to C-terminus: Small ribosomal subunit protein uS19 (92 aa).

This sequence belongs to the universal ribosomal protein uS19 family.

In terms of biological role, protein S19 forms a complex with S13 that binds strongly to the 16S ribosomal RNA. The chain is Small ribosomal subunit protein uS19 from Aeromonas hydrophila subsp. hydrophila (strain ATCC 7966 / DSM 30187 / BCRC 13018 / CCUG 14551 / JCM 1027 / KCTC 2358 / NCIMB 9240 / NCTC 8049).